A 341-amino-acid polypeptide reads, in one-letter code: MINLQNVSKIYRSKHGDVNAVQDVTLTIKKGEIFGIIGYSGAGKSSLIRLLNGLEQPTSGTVEVAGRKISEIKGKKLRKARQEISMIFQHFNLLWSRTVRDNIAFPLEIAGVSKAKRLERVAELIKLVGLEGKENAYPSQLSGGQKQRVGIARALANNPKVLLCDEATSALDPQTTDSILGLLSDINERLGLTIVLITHEMHVIRKICHRVAVMENGKVVEEGDVLNVFIKPKEEMTKRFVQQVTEPVETKETLKHFLEETTSGRTIKLTFVGEAAESPLITQIIRKFDVEVNILQGKISQTQDGAYGSLFIHVDGRENEVNDVVDFIKSRQVEAEVITNV.

Residues 2–241 (INLQNVSKIY…PKEEMTKRFV (240 aa)) enclose the ABC transporter domain. 38 to 45 (GYSGAGKS) provides a ligand contact to ATP.

The protein belongs to the ABC transporter superfamily. Methionine importer (TC 3.A.1.24) family. In terms of assembly, the complex is composed of two ATP-binding proteins (MetN), two transmembrane proteins (MetI) and a solute-binding protein (MetQ).

The protein localises to the cell membrane. The enzyme catalyses L-methionine(out) + ATP + H2O = L-methionine(in) + ADP + phosphate + H(+). It carries out the reaction D-methionine(out) + ATP + H2O = D-methionine(in) + ADP + phosphate + H(+). In terms of biological role, part of the ABC transporter complex MetNIQ involved in methionine import. Responsible for energy coupling to the transport system. The chain is Methionine import ATP-binding protein MetN 2 from Bacillus licheniformis (strain ATCC 14580 / DSM 13 / JCM 2505 / CCUG 7422 / NBRC 12200 / NCIMB 9375 / NCTC 10341 / NRRL NRS-1264 / Gibson 46).